The sequence spans 271 residues: Elongation factor Ts (271 aa).

Positions 76–79 (TDFV) are involved in Mg(2+) ion dislocation from EF-Tu.

The protein belongs to the EF-Ts family.

The protein resides in the cytoplasm. Functionally, associates with the EF-Tu.GDP complex and induces the exchange of GDP to GTP. It remains bound to the aminoacyl-tRNA.EF-Tu.GTP complex up to the GTP hydrolysis stage on the ribosome. This Mycolicibacterium vanbaalenii (strain DSM 7251 / JCM 13017 / BCRC 16820 / KCTC 9966 / NRRL B-24157 / PYR-1) (Mycobacterium vanbaalenii) protein is Elongation factor Ts.